Reading from the N-terminus, the 231-residue chain is Enolase-phosphatase E1 (231 aa).

The protein belongs to the HAD-like hydrolase superfamily. MasA/MtnC family. In terms of assembly, monomer. It depends on Mg(2+) as a cofactor.

The catalysed reaction is 5-methylsulfanyl-2,3-dioxopentyl phosphate + H2O = 1,2-dihydroxy-5-(methylsulfanyl)pent-1-en-3-one + phosphate. It functions in the pathway amino-acid biosynthesis; L-methionine biosynthesis via salvage pathway; L-methionine from S-methyl-5-thio-alpha-D-ribose 1-phosphate: step 3/6. The protein operates within amino-acid biosynthesis; L-methionine biosynthesis via salvage pathway; L-methionine from S-methyl-5-thio-alpha-D-ribose 1-phosphate: step 4/6. Functionally, bifunctional enzyme that catalyzes the enolization of 2,3-diketo-5-methylthiopentyl-1-phosphate (DK-MTP-1-P) into the intermediate 2-hydroxy-3-keto-5-methylthiopentenyl-1-phosphate (HK-MTPenyl-1-P), which is then dephosphorylated to form the acireductone 1,2-dihydroxy-3-keto-5-methylthiopentene (DHK-MTPene). In Stenotrophomonas maltophilia (strain K279a), this protein is Enolase-phosphatase E1.